The primary structure comprises 291 residues: Nucleotide-binding protein MSMEG_3079/MSMEI_3001 (291 aa).

Residue 14–21 coordinates ATP; the sequence is GLSGAGRG. Residue 65–68 coordinates GTP; it reads DVRS.

Belongs to the RapZ-like family.

Displays ATPase and GTPase activities. The sequence is that of Nucleotide-binding protein MSMEG_3079/MSMEI_3001 from Mycolicibacterium smegmatis (strain ATCC 700084 / mc(2)155) (Mycobacterium smegmatis).